Reading from the N-terminus, the 420-residue chain is MTKWKRANPNGTRDYLFEECTLIEEVEQKLRRTFLERGYEEIRTPTIEFYDVFAFQSRPIDEEKMYKFFDEKGRIIVLRPDMTIPLARVIGTQRCDTPLKVTYSGNVFRANESLTGKYNEIVQSGIEIIGIDNVRAEIECVISVIQSLQKLKVQSFTIEIGQVQLYKCIVKKLSIHEEEEKVLRTYIESKNYAALSNFIRDKKLDRCDETVKLLEKLPRLFGNLEVIEEAEKLASSNEMKMAITRVKEIYEAIDKLGYGSYISIDLGMIQHLDYYTGVIFKGYIYEIGEEIVSGGRYDELIGNFGEMLPAVGLAVQVNQIVKALQEQQKPYERKRIDIMIHYELNRLAEAERLRNLLQKDGKKVALSLFSNLNDTFQFARKNQIVTVVEAKNESLVEYVWKEKWVVQKEGETSCVTFKLR.

This sequence belongs to the class-II aminoacyl-tRNA synthetase family. HisZ subfamily. As to quaternary structure, heteromultimer composed of HisG and HisZ subunits.

Its subcellular location is the cytoplasm. Its pathway is amino-acid biosynthesis; L-histidine biosynthesis; L-histidine from 5-phospho-alpha-D-ribose 1-diphosphate: step 1/9. Functionally, required for the first step of histidine biosynthesis. May allow the feedback regulation of ATP phosphoribosyltransferase activity by histidine. This Bacillus cereus (strain AH187) protein is ATP phosphoribosyltransferase regulatory subunit.